Here is a 392-residue protein sequence, read N- to C-terminus: Chalcone synthase B (392 aa).

Cysteine 167 is a catalytic residue.

Belongs to the thiolase-like superfamily. Chalcone/stilbene synthases family. As to expression, expressed at low level in seedlings after illumination with UV light. No expression in flowers or tissue culture.

The catalysed reaction is (E)-4-coumaroyl-CoA + 3 malonyl-CoA + 3 H(+) = 2',4,4',6'-tetrahydroxychalcone + 3 CO2 + 4 CoA. Its pathway is secondary metabolite biosynthesis; flavonoid biosynthesis. The primary product of this enzyme is 4,2',4',6'-tetrahydroxychalcone (also termed naringenin-chalcone or chalcone) which can under specific conditions spontaneously isomerize into naringenin. In Petunia hybrida (Petunia), this protein is Chalcone synthase B (CHSB).